An 82-amino-acid polypeptide reads, in one-letter code: Beta-defensin 113 (82 aa).

The signal sequence occupies residues 1-16 (MKILCIFLTFFFTVSC). Cystine bridges form between Cys35-Cys61, Cys42-Cys56, and Cys46-Cys62.

The protein belongs to the beta-defensin family.

Its subcellular location is the secreted. Has antibacterial activity. In Pan troglodytes (Chimpanzee), this protein is Beta-defensin 113 (DEFB113).